The primary structure comprises 74 residues: Kappa-stichotoxin-Sgt4a (74 aa).

The N-terminal stretch at 1-22 is a signal peptide; sequence MKFQVIAAVLLIEFCLCVVVTA. Residues 23 to 39 constitute a propeptide that is removed on maturation; it reads RMELQDVEDVENGFQKR. Residues 42 to 74 form the ShKT domain; sequence CIDTIPQSRCTAFQCKHSMKYRLSFCRKTCGTC. Intrachain disulfides connect Cys-42/Cys-74, Cys-51/Cys-67, and Cys-56/Cys-71.

Belongs to the sea anemone type 1 potassium channel toxin family. Type 1a subfamily.

It is found in the secreted. The protein localises to the nematocyst. Inhibits voltage-gated potassium channels (Kv) with higher potency for Kv1.1/KCNA1 and Kv1.3/KCNA3. The protein is Kappa-stichotoxin-Sgt4a of Stichodactyla gigantea (Giant carpet anemone).